The following is a 286-amino-acid chain: Polyamine aminopropyltransferase (286 aa).

Positions 5 to 238 constitute a PABS domain; the sequence is TMWHETLHDQ…GIMTFAWATD (234 aa). An S-methyl-5'-thioadenosine-binding site is contributed by glutamine 33. 2 residues coordinate spermidine: histidine 64 and aspartate 88. S-methyl-5'-thioadenosine is bound by residues glutamate 108 and 140–141; that span reads DG. Aspartate 158 (proton acceptor) is an active-site residue. Residue 158–161 participates in spermidine binding; that stretch reads DCTD. An S-methyl-5'-thioadenosine-binding site is contributed by proline 165.

The protein belongs to the spermidine/spermine synthase family. In terms of assembly, homodimer or homotetramer.

It localises to the cytoplasm. The enzyme catalyses S-adenosyl 3-(methylsulfanyl)propylamine + putrescine = S-methyl-5'-thioadenosine + spermidine + H(+). It functions in the pathway amine and polyamine biosynthesis; spermidine biosynthesis; spermidine from putrescine: step 1/1. Its function is as follows. Catalyzes the irreversible transfer of a propylamine group from the amino donor S-adenosylmethioninamine (decarboxy-AdoMet) to putrescine (1,4-diaminobutane) to yield spermidine. This is Polyamine aminopropyltransferase from Salmonella enteritidis PT4 (strain P125109).